The chain runs to 119 residues: Auxin-responsive protein SAUR78 (119 aa).

Belongs to the ARG7 family.

In terms of biological role, may be involved in the regulation of ethylene receptor signaling. Promotes cell expansion and plant growth. The chain is Auxin-responsive protein SAUR78 from Arabidopsis thaliana (Mouse-ear cress).